Consider the following 282-residue polypeptide: Dof zinc finger protein 4 (282 aa).

The segment at 45–99 adopts a Dof-type zinc-finger fold; that stretch reads VKCPRCESTNTKFCYYNNYNLSQPRHFCKSCRRYWTKGGVLRNVPVGGGCRKTKR. Zn(2+)-binding residues include Cys47, Cys50, Cys72, and Cys75. Positions 89-161 are disordered; that stretch reads PVGGGCRKTK…TTPATPSSNT (73 aa). 2 stretches are compositionally biased toward low complexity: residues 102–117 and 125–161; these read SSSA…TAAT and RASA…SSNT.

It localises to the nucleus. Transcription factor that may transactivate seed storage protein genes in developing seeds. This Oryza sativa subsp. japonica (Rice) protein is Dof zinc finger protein 4.